A 509-amino-acid polypeptide reads, in one-letter code: Transcription factor atf-7 (509 aa).

The span at 283–303 (TVSSYHSPLGASSQPPSTQKS) shows a compositional bias: polar residues. Disordered regions lie at residues 283 to 318 (TVSS…EKQI) and 337 to 400 (NMSS…ILER). Residues 308–318 (SWDHINGEKQI) are compositionally biased toward basic and acidic residues. The segment covering 337 to 364 (NMSSSGSDQDQSADMSNAGSTASTSTGN) has biased composition (low complexity). The segment covering 390–400 (PDERRNTILER) has biased composition (basic and acidic residues). The 74-residue stretch at 391-464 (DERRNTILER…TERESRCVCL (74 aa)) folds into the bZIP domain. A basic motif region spans residues 393–413 (RRNTILERNKAAAVRYRKRKK). Residues 419 to 450 (MMGRVQAMEAEKNQLLAIQTQNQVLRRELERV) are leucine-zipper.

It belongs to the bZIP family. In terms of assembly, interacts with serine/threonine kinase pmk-1; perhaps in a manner dependent on dual specificity protein kinase sek-1. Expressed in intestinal cells.

It is found in the nucleus. It localises to the chromosome. Functionally, transcription factor which regulates the transcription of various genes, including those involved in innate immunity and oxidative stress responses. Binds to promoter regions of genes, probably at 5'-[GACGTCA]-3' consensus sequences. Together with transcription factor daf-19, involved in regulation of the serotonergic response of ADF neurons to pathogenic food. Modulates response to infection by the Gram-negative bacterium P.aeruginosa, acting downstream of the p38 signal transduction pathway effector serine/threonine kinase pmk-1. May act with transcription factor elt-2 to control p38 gene induction in response to bacterial infection. May be phosphorylated by pmk-1. Regulates transcription of the metallothionein gene, mtl-1, perhaps acting downstream of pmk-1. The sequence is that of Transcription factor atf-7 from Caenorhabditis elegans.